A 346-amino-acid chain; its full sequence is Aspartate-semialdehyde dehydrogenase (346 aa).

Residues 10–13 and 38–39 contribute to the NADP(+) site; these read TGQG and RS. R98 lines the phosphate pocket. C131 acts as the Acyl-thioester intermediate in catalysis. Residue Q158 coordinates substrate. 161–162 contributes to the NADP(+) binding site; sequence SG. K228 contributes to the phosphate binding site. R250 lines the substrate pocket. H257 serves as the catalytic Proton acceptor. N326 is an NADP(+) binding site.

This sequence belongs to the aspartate-semialdehyde dehydrogenase family. Homodimer.

The enzyme catalyses L-aspartate 4-semialdehyde + phosphate + NADP(+) = 4-phospho-L-aspartate + NADPH + H(+). Its pathway is amino-acid biosynthesis; L-lysine biosynthesis via DAP pathway; (S)-tetrahydrodipicolinate from L-aspartate: step 2/4. It functions in the pathway amino-acid biosynthesis; L-methionine biosynthesis via de novo pathway; L-homoserine from L-aspartate: step 2/3. It participates in amino-acid biosynthesis; L-threonine biosynthesis; L-threonine from L-aspartate: step 2/5. In terms of biological role, catalyzes the NADPH-dependent formation of L-aspartate-semialdehyde (L-ASA) by the reductive dephosphorylation of L-aspartyl-4-phosphate. In Mycolicibacterium smegmatis (Mycobacterium smegmatis), this protein is Aspartate-semialdehyde dehydrogenase.